Reading from the N-terminus, the 62-residue chain is Large ribosomal subunit protein uL29 (62 aa).

Belongs to the universal ribosomal protein uL29 family.

The sequence is that of Large ribosomal subunit protein uL29 from Trichlorobacter lovleyi (strain ATCC BAA-1151 / DSM 17278 / SZ) (Geobacter lovleyi).